A 357-amino-acid chain; its full sequence is Phosphoribosylformylglycinamidine cyclo-ligase (357 aa).

Belongs to the AIR synthase family.

The protein localises to the cytoplasm. The catalysed reaction is 2-formamido-N(1)-(5-O-phospho-beta-D-ribosyl)acetamidine + ATP = 5-amino-1-(5-phospho-beta-D-ribosyl)imidazole + ADP + phosphate + H(+). The protein operates within purine metabolism; IMP biosynthesis via de novo pathway; 5-amino-1-(5-phospho-D-ribosyl)imidazole from N(2)-formyl-N(1)-(5-phospho-D-ribosyl)glycinamide: step 2/2. The polypeptide is Phosphoribosylformylglycinamidine cyclo-ligase (Rhodopseudomonas palustris (strain BisB18)).